Consider the following 188-residue polypeptide: Probable chorismate pyruvate-lyase (188 aa).

Residues R90, L128, and E175 each contribute to the substrate site.

The protein belongs to the UbiC family.

Its subcellular location is the cytoplasm. It catalyses the reaction chorismate = 4-hydroxybenzoate + pyruvate. It participates in cofactor biosynthesis; ubiquinone biosynthesis. Functionally, removes the pyruvyl group from chorismate, with concomitant aromatization of the ring, to provide 4-hydroxybenzoate (4HB) for the ubiquinone pathway. In Marinobacter nauticus (strain ATCC 700491 / DSM 11845 / VT8) (Marinobacter aquaeolei), this protein is Probable chorismate pyruvate-lyase.